The sequence spans 146 residues: VPIQKVQDDTKTLIKTIVTRISDISHTQSVSSKQKVTGLDFIPGLHPILTLSKMDQTLAVYQQILTSMPSRNMIQISNDLENLRDLLHVLAFSKSCHLPWASGLETLDSLGGVLEASGYSTEVVALSRLQGSLQDMLWQLDLSPGC.

Residues C96 and C146 are joined by a disulfide bond.

The protein belongs to the leptin family.

Its subcellular location is the secreted. Functionally, key player in the regulation of energy balance and body weight control. Once released into the circulation, has central and peripheral effects by binding LEPR, found in many tissues, which results in the activation of several major signaling pathways. In the hypothalamus, acts as an appetite-regulating factor that induces a decrease in food intake and an increase in energy consumption by inducing anorexinogenic factors and suppressing orexigenic neuropeptides, also regulates bone mass and secretion of hypothalamo-pituitary-adrenal hormones. In the periphery, increases basal metabolism, influences reproductive function, regulates pancreatic beta-cell function and insulin secretion, is pro-angiogenic for endothelial cell and affects innate and adaptive immunity. In the arcuate nucleus of the hypothalamus, activates by depolarization POMC neurons inducing FOS and SOCS3 expression to release anorexigenic peptides and inhibits by hyperpolarization NPY neurons inducing SOCS3 with a consequent reduction on release of orexigenic peptides. In addition to its known satiety inducing effect, has a modulatory role in nutrient absorption. In the intestine, reduces glucose absorption by enterocytes by activating PKC and leading to a sequential activation of p38, PI3K and ERK signaling pathways which exerts an inhibitory effect on glucose absorption. Acts as a growth factor on certain tissues, through the activation of different signaling pathways increases expression of genes involved in cell cycle regulation such as CCND1, via JAK2-STAT3 pathway, or VEGFA, via MAPK1/3 and PI3K-AKT1 pathways. May also play an apoptotic role via JAK2-STAT3 pathway and up-regulation of BIRC5 expression. Pro-angiogenic, has mitogenic activity on vascular endothelial cells and plays a role in matrix remodeling by regulating the expression of matrix metalloproteinases (MMPs) and tissue inhibitors of metalloproteinases (TIMPs). In innate immunity, modulates the activity and function of neutrophils by increasing chemotaxis and the secretion of oxygen radicals. Increases phagocytosis by macrophages and enhances secretion of pro-inflammatory mediators. Increases cytotoxic ability of NK cells. Plays a pro-inflammatory role, in synergy with IL1B, by inducing NOS2 which promotes the production of IL6, IL8 and Prostaglandin E2, through a signaling pathway that involves JAK2, PI3K, MAP2K1/MEK1 and MAPK14/p38. In adaptive immunity, promotes the switch of memory T-cells towards T helper-1 cell immune responses. Increases CD4(+)CD25(-) T-cell proliferation and reduces autophagy during TCR (T-cell receptor) stimulation, through MTOR signaling pathway activation and BCL2 up-regulation. The protein is Leptin (LEP) of Gorilla gorilla gorilla (Western lowland gorilla).